A 186-amino-acid chain; its full sequence is Testis-expressed protein 36 (186 aa).

The interval 1–52 (MTKGRRFNPPSDKDGRWFPHIGLTQKTPESITSATSKEPQSPHLPRQAEGKL) is disordered. Polar residues predominate over residues 24–39 (TQKTPESITSATSKEP).

This is Testis-expressed protein 36 (TEX36) from Homo sapiens (Human).